A 544-amino-acid chain; its full sequence is Tyrosine-protein kinase Yes (544 aa).

G2 carries the N-myristoyl glycine lipid modification. Residues 92 to 153 (GGVTFFVALY…PSNYVAPADS (62 aa)) enclose the SH3 domain. Residues 159–256 (WYFGKLSRKD…GLCYKLTTVC (98 aa)) enclose the SH2 domain. Positions 278-531 (LRLDVRLGQG…YIQSFLEDYF (254 aa)) constitute a Protein kinase domain. ATP is bound by residues 284 to 292 (LGQGCFGEV) and K306. Residue D397 is the Proton acceptor of the active site. Residue Y427 is modified to Phosphotyrosine; by autocatalysis.

It belongs to the protein kinase superfamily. Tyr protein kinase family. SRC subfamily.

The catalysed reaction is L-tyrosyl-[protein] + ATP = O-phospho-L-tyrosyl-[protein] + ADP + H(+). The sequence is that of Tyrosine-protein kinase Yes (yes) from Xiphophorus hellerii (Green swordtail).